The sequence spans 241 residues: Probable 2-phosphosulfolactate phosphatase (241 aa).

It belongs to the ComB family. It depends on Mg(2+) as a cofactor.

It carries out the reaction (2R)-O-phospho-3-sulfolactate + H2O = (2R)-3-sulfolactate + phosphate. The polypeptide is Probable 2-phosphosulfolactate phosphatase (Deinococcus geothermalis (strain DSM 11300 / CIP 105573 / AG-3a)).